The primary structure comprises 165 residues: Anterior gradient protein 3 (165 aa).

The N-terminal stretch at 1–20 (MLHSALALCLLLITVSSNLA) is a signal peptide. Residues 162–165 (QSEL) carry the Prevents secretion from ER motif.

This sequence belongs to the AGR family. Interacts with LYPD3 and DAG1 (alphaDAG1). As to expression, expressed in the ciliated cells of the airway epithelium. Not detected in the mucous cells.

The protein localises to the endoplasmic reticulum. It localises to the cytoplasm. Required for calcium-mediated regulation of ciliary beat frequency and mucociliary clearance in the airway. Might be involved in the regulation of intracellular calcium in tracheal epithelial cells. The protein is Anterior gradient protein 3 of Mus musculus (Mouse).